Consider the following 202-residue polypeptide: UPF0301 protein Meso_0753 (202 aa).

This sequence belongs to the UPF0301 (AlgH) family.

The sequence is that of UPF0301 protein Meso_0753 from Chelativorans sp. (strain BNC1).